The chain runs to 2148 residues: Polyketide synthase 1 (2148 aa).

The N-terminal acylcarrier protein transacylase domain (SAT) stretch occupies residues 19-261 (FIFGDQSSCN…TPLAVHAPYH (243 aa)). Residues 394-829 (DSKIAIIGMS…GGNTALLVED (436 aa)) enclose the Ketosynthase family 3 (KS3) domain. Residues Cys566, His701, and His745 each act as for beta-ketoacyl synthase activity in the active site. A malonyl-CoA:ACP transacylase (MAT) domain region spans residues 929–1233 (AFVFSGQGSQ…PSLMRNKDGW (305 aa)). Ser1018 (for acyl/malonyl transferase activity) is an active-site residue. The tract at residues 1310–1624 (TASVHRIVHE…RKVLNTAMPP (315 aa)) is product template (PT) domain. The N-terminal hotdog fold stretch occupies residues 1314 to 1447 (HRIVHESVDK…SSLHFEQPKV (134 aa)). Residues 1314-1619 (HRIVHESVDK…FQGIPRKVLN (306 aa)) form the PKS/mFAS DH domain. His1346 acts as the Proton acceptor; for dehydratase activity in catalysis. The C-terminal hotdog fold stretch occupies residues 1474-1619 (LNSRMSSGVI…FQGIPRKVLN (146 aa)). Asp1533 functions as the Proton donor; for dehydratase activity in the catalytic mechanism. The interval 1619–1655 (NTAMPPPKSQNEAQVHSSPAKSRPKPPGSASSVHSGR) is disordered. Residues 1627–1638 (SQNEAQVHSSPA) show a composition bias toward polar residues. One can recognise a Carrier 1 domain in the interval 1678 to 1752 (RDPMQALFKI…DLATHLGFDT (75 aa)). Residue Ser1712 is modified to O-(pantetheine 4'-phosphoryl)serine. The span at 1756–1769 (DQSSGQSSSCGGLS) shows a compositional bias: low complexity. Positions 1756–1796 (DQSSGQSSSCGGLSPRSDSTGEITSNATTPPSLSPRGSVSG) are disordered. The span at 1771 to 1796 (RSDSTGEITSNATTPPSLSPRGSVSG) shows a compositional bias: polar residues. One can recognise a Carrier 2 domain in the interval 1793–1870 (SVSGSQCKDV…SFKHMFQQGH (78 aa)). Ser1830 is modified (O-(pantetheine 4'-phosphoryl)serine). The segment at 1882–2146 (LKQYRATSTL…ERVAAFIRST (265 aa)) is thioesterase (TE) domain. Ser1973 acts as the For thioesterase activity in catalysis.

Polyketide synthase; part of the Pks1 gene cluster that mediates the biosynthesis of an anthraquinone derivative pigment that contributes to conidial pigmentation that provides protection from UV radiation, heat and cold stress. The polyketide synthase Pks1 produces 1-acetyl-2,4,6,8-tetrahydroxy-9,10-anthraquinone though condensation of acetyl-CoA with malonyl-CoA. The dehydratase EthD and the laccase Mlac1 further convert the anthraquinone derivative into the final conidial pigment. This chain is Polyketide synthase 1, found in Metarhizium acridum (strain CQMa 102).